Reading from the N-terminus, the 296-residue chain is Indole-3-glycerol phosphate synthase (296 aa).

It belongs to the TrpC family.

It carries out the reaction 1-(2-carboxyphenylamino)-1-deoxy-D-ribulose 5-phosphate + H(+) = (1S,2R)-1-C-(indol-3-yl)glycerol 3-phosphate + CO2 + H2O. The protein operates within amino-acid biosynthesis; L-tryptophan biosynthesis; L-tryptophan from chorismate: step 4/5. This chain is Indole-3-glycerol phosphate synthase, found in Microcystis aeruginosa (strain NIES-843 / IAM M-2473).